Here is a 245-residue protein sequence, read N- to C-terminus: MLLIPAIDLKDGHCVRLRQGDMDQSTTFGENPAAMARQWIDAGARRLHLVDLNGALAGMPKNYGAIKSILKEVGDDIPVQLGGGIRDLDTIEKYIDGGLRYVIIGTAAVKNPGFLKDACSAFGGHIIVGLDARDGKVATDGWSKLTGHGVVDLARKFEDWGVESIIYTDIGRDGMLSGINIDATVALAQALSIPVIASGGLSGMADIEQLCAVQDEGIEGVICGRAIYSGDLDFAAAQARADEMG.

Aspartate 8 serves as the catalytic Proton acceptor. Aspartate 131 functions as the Proton donor in the catalytic mechanism.

Belongs to the HisA/HisF family.

It is found in the cytoplasm. It catalyses the reaction 1-(5-phospho-beta-D-ribosyl)-5-[(5-phospho-beta-D-ribosylamino)methylideneamino]imidazole-4-carboxamide = 5-[(5-phospho-1-deoxy-D-ribulos-1-ylimino)methylamino]-1-(5-phospho-beta-D-ribosyl)imidazole-4-carboxamide. The protein operates within amino-acid biosynthesis; L-histidine biosynthesis; L-histidine from 5-phospho-alpha-D-ribose 1-diphosphate: step 4/9. The chain is 1-(5-phosphoribosyl)-5-[(5-phosphoribosylamino)methylideneamino] imidazole-4-carboxamide isomerase from Verminephrobacter eiseniae (strain EF01-2).